Consider the following 677-residue polypeptide: Methionine--tRNA ligase (677 aa).

The 'HIGH' region signature appears at 15–25; sequence PYANGSIHLGH. Positions 146, 149, 159, and 162 each coordinate Zn(2+). Positions 333 to 337 match the 'KMSKS' region motif; it reads KMSKS. ATP is bound at residue Lys336. One can recognise a tRNA-binding domain in the interval 575-677; the sequence is DFAKVDLRVA…DGAKPGQQVK (103 aa).

It belongs to the class-I aminoacyl-tRNA synthetase family. MetG type 1 subfamily. In terms of assembly, homodimer. It depends on Zn(2+) as a cofactor.

The protein resides in the cytoplasm. It carries out the reaction tRNA(Met) + L-methionine + ATP = L-methionyl-tRNA(Met) + AMP + diphosphate. Functionally, is required not only for elongation of protein synthesis but also for the initiation of all mRNA translation through initiator tRNA(fMet) aminoacylation. The polypeptide is Methionine--tRNA ligase (Salmonella schwarzengrund (strain CVM19633)).